The sequence spans 93 residues: Large ribosomal subunit protein bL31B (93 aa).

Belongs to the bacterial ribosomal protein bL31 family. Type B subfamily. In terms of assembly, part of the 50S ribosomal subunit.

This is Large ribosomal subunit protein bL31B from Psychrobacter cryohalolentis (strain ATCC BAA-1226 / DSM 17306 / VKM B-2378 / K5).